We begin with the raw amino-acid sequence, 166 residues long: FMN reductase (NADH) RutF (166 aa).

The protein belongs to the non-flavoprotein flavin reductase family. RutF subfamily.

The enzyme catalyses FMNH2 + NAD(+) = FMN + NADH + 2 H(+). Catalyzes the reduction of FMN to FMNH2 which is used to reduce pyrimidine by RutA via the Rut pathway. The sequence is that of FMN reductase (NADH) RutF from Cronobacter turicensis (strain DSM 18703 / CCUG 55852 / LMG 23827 / z3032).